The following is a 172-amino-acid chain: Protein-export protein SecB (172 aa).

A disordered region spans residues 153–172 (AQGQGGDSGIVMPDGSQARH).

It belongs to the SecB family. As to quaternary structure, homotetramer, a dimer of dimers. One homotetramer interacts with 1 SecA dimer.

The protein resides in the cytoplasm. Functionally, one of the proteins required for the normal export of preproteins out of the cell cytoplasm. It is a molecular chaperone that binds to a subset of precursor proteins, maintaining them in a translocation-competent state. It also specifically binds to its receptor SecA. In Cupriavidus metallidurans (strain ATCC 43123 / DSM 2839 / NBRC 102507 / CH34) (Ralstonia metallidurans), this protein is Protein-export protein SecB.